The sequence spans 177 residues: UPF0178 protein TP_0845 (177 aa).

Residues Glu-155–Arg-177 form a disordered region.

Belongs to the UPF0178 family.

The sequence is that of UPF0178 protein TP_0845 from Treponema pallidum (strain Nichols).